Here is a 278-residue protein sequence, read N- to C-terminus: Adenylate kinase (278 aa).

50-55 is a binding site for ATP; sequence GAGKGT. Residues 70 to 99 form an NMP region; it reads ATGDMLRAQVAKGTALGKQAKKIMNEGGLV. Residues threonine 71, arginine 76, 97–99, 126–129, and glutamine 133 contribute to the AMP site; these read GLV and GFPR. Residues 167 to 204 are LID; that stretch reads GRLVHPASGRSYHRIFNPPKDDMKDDITGEPLVQRSDD. ATP contacts are provided by residues arginine 168 and 177–178; that span reads SY. Arginine 201 and arginine 212 together coordinate AMP. ATP is bound at residue glutamine 240.

This sequence belongs to the adenylate kinase family. AK2 subfamily. In terms of assembly, monomer.

Its subcellular location is the cytoplasm. The protein resides in the cytosol. The protein localises to the mitochondrion intermembrane space. It catalyses the reaction AMP + ATP = 2 ADP. Functionally, catalyzes the reversible transfer of the terminal phosphate group between ATP and AMP. Plays an important role in cellular energy homeostasis and in adenine nucleotide metabolism. Adenylate kinase activity is critical for regulation of the phosphate utilization and the AMP de novo biosynthesis pathways. The sequence is that of Adenylate kinase (adk-1) from Neurospora crassa (strain ATCC 24698 / 74-OR23-1A / CBS 708.71 / DSM 1257 / FGSC 987).